We begin with the raw amino-acid sequence, 172 residues long: Lipoprotein signal peptidase (172 aa).

4 helical membrane-spanning segments follow: residues 4–24 (LSSS…LDQV), 39–59 (VAIL…AFSF), 69–89 (WFFT…LAKL), and 93–113 (WTLE…NVID). Active-site residues include D122 and D140. A helical membrane pass occupies residues 136–156 (FNVADMGISIGAVLLIISEFW).

It belongs to the peptidase A8 family.

The protein localises to the cell inner membrane. It carries out the reaction Release of signal peptides from bacterial membrane prolipoproteins. Hydrolyzes -Xaa-Yaa-Zaa-|-(S,diacylglyceryl)Cys-, in which Xaa is hydrophobic (preferably Leu), and Yaa (Ala or Ser) and Zaa (Gly or Ala) have small, neutral side chains.. It participates in protein modification; lipoprotein biosynthesis (signal peptide cleavage). Functionally, this protein specifically catalyzes the removal of signal peptides from prolipoproteins. The polypeptide is Lipoprotein signal peptidase (Hydrogenovibrio crunogenus (strain DSM 25203 / XCL-2) (Thiomicrospira crunogena)).